The chain runs to 349 residues: Methylglutaconyl-CoA hydratase 1, mitochondrial (349 aa).

A mitochondrion-targeting transit peptide spans 1 to 37; that stretch reads MPPVSRILSYAPRVAIRPSSQLARPARAFAVGTVRYY.

It belongs to the enoyl-CoA hydratase/isomerase family. In terms of assembly, homohexamer.

Its subcellular location is the mitochondrion. It carries out the reaction (3S)-3-hydroxy-3-methylglutaryl-CoA = 3-methyl-(2E)-glutaconyl-CoA + H2O. Its pathway is amino-acid degradation; L-leucine degradation; (S)-3-hydroxy-3-methylglutaryl-CoA from 3-isovaleryl-CoA: step 3/3. Its function is as follows. 3-methylglutaconyl-CoA hydratase that catalyzes the fifth step in the leucine degradation pathway, the reversible hydration of 3-methylglutaconyl-CoA (3-MG-CoA) to 3-hydroxy-3-methylglutaryl-CoA (HMG-CoA). Involved in vegetative growth, conidiation and in the stress response. Controls mitochondrial morphology and mitophagy, which are critical for the infectious growth of the pathogen. The chain is Methylglutaconyl-CoA hydratase 1, mitochondrial from Pyricularia oryzae (strain 70-15 / ATCC MYA-4617 / FGSC 8958) (Rice blast fungus).